A 126-amino-acid chain; its full sequence is Phosphoribosyl-ATP pyrophosphatase (126 aa).

This sequence belongs to the PRA-PH family.

The protein localises to the cytoplasm. The enzyme catalyses 1-(5-phospho-beta-D-ribosyl)-ATP + H2O = 1-(5-phospho-beta-D-ribosyl)-5'-AMP + diphosphate + H(+). It functions in the pathway amino-acid biosynthesis; L-histidine biosynthesis; L-histidine from 5-phospho-alpha-D-ribose 1-diphosphate: step 2/9. The polypeptide is Phosphoribosyl-ATP pyrophosphatase (Variovorax paradoxus (strain S110)).